The following is a 465-amino-acid chain: 6-phospho-beta-glucosidase (465 aa).

Catalysis depends on glutamate 173, which acts as the Proton donor. Residue glutamate 362 is the Nucleophile of the active site.

It belongs to the glycosyl hydrolase 1 family.

The enzyme catalyses 6-phospho-beta-D-glucosyl-(1-&gt;4)-D-glucose + H2O = D-glucose 6-phosphate + D-glucose. The protein operates within carbohydrate metabolism; beta-glucoside metabolism. This Dickeya chrysanthemi (Pectobacterium chrysanthemi) protein is 6-phospho-beta-glucosidase (arbB).